Consider the following 239-residue polypeptide: Orotidine 5'-phosphate decarboxylase (239 aa).

Substrate is bound by residues aspartate 11, lysine 33, 60–69, threonine 123, arginine 185, glutamine 194, glycine 214, and arginine 215; that span reads DLKLHDIPTT. Catalysis depends on lysine 62, which acts as the Proton donor.

Belongs to the OMP decarboxylase family. Type 1 subfamily. In terms of assembly, homodimer.

It carries out the reaction orotidine 5'-phosphate + H(+) = UMP + CO2. The protein operates within pyrimidine metabolism; UMP biosynthesis via de novo pathway; UMP from orotate: step 2/2. Its function is as follows. Catalyzes the decarboxylation of orotidine 5'-monophosphate (OMP) to uridine 5'-monophosphate (UMP). This chain is Orotidine 5'-phosphate decarboxylase (pyrF), found in Bacillus subtilis (strain 168).